The primary structure comprises 282 residues: tRNA pseudouridine synthase B (282 aa).

Aspartate 39 (nucleophile) is an active-site residue.

The protein belongs to the pseudouridine synthase TruB family. Type 1 subfamily.

It catalyses the reaction uridine(55) in tRNA = pseudouridine(55) in tRNA. Its function is as follows. Responsible for synthesis of pseudouridine from uracil-55 in the psi GC loop of transfer RNAs. In Borreliella afzelii (strain PKo) (Borrelia afzelii), this protein is tRNA pseudouridine synthase B.